The primary structure comprises 224 residues: Protein DCL, chloroplastic (224 aa).

The transit peptide at 1–50 (MASICTSNFHFLCRKNNSSPISHHLLLSPSSLSFSRCGGLRLCRCAAVKT) directs the protein to the chloroplast. Residues 76 to 98 (TTSESEELVKEESDDEVGKKSGD) form a disordered region. Basic and acidic residues predominate over residues 82–98 (ELVKEESDDEVGKKSGD).

Its subcellular location is the plastid. The protein resides in the chloroplast. Its function is as follows. Has a function in the early stage of chloroplast development and palisade cell morphogenesis. Required for correct plastid ribosome assembly. Required for processing and maturation of 4.5S rRNA. The polypeptide is Protein DCL, chloroplastic (DCL) (Solanum lycopersicum (Tomato)).